The sequence spans 268 residues: Trans-aconitate 2-methyltransferase (268 aa).

This sequence belongs to the methyltransferase superfamily. Tam family.

Its subcellular location is the cytoplasm. It carries out the reaction trans-aconitate + S-adenosyl-L-methionine = (E)-3-(methoxycarbonyl)pent-2-enedioate + S-adenosyl-L-homocysteine. In terms of biological role, catalyzes the S-adenosylmethionine monomethyl esterification of trans-aconitate. This is Trans-aconitate 2-methyltransferase from Delftia acidovorans (strain DSM 14801 / SPH-1).